The sequence spans 276 residues: Glucosamine-6-phosphate deaminase 2 (276 aa).

The Proton acceptor; for enolization step role is filled by aspartate 72. The stretch at 106 to 130 (ILDGNATDLQAECDAFEKKIKEAGG) forms a coiled coil. Aspartate 141 serves as the catalytic For ring-opening step. The Proton acceptor; for ring-opening step role is filled by histidine 143. Glutamate 148 functions as the For ring-opening step in the catalytic mechanism. Phosphothreonine is present on threonine 161.

This sequence belongs to the glucosamine/galactosamine-6-phosphate isomerase family. Homohexamer.

The protein localises to the cytoplasm. It carries out the reaction alpha-D-glucosamine 6-phosphate + H2O = beta-D-fructose 6-phosphate + NH4(+). The protein operates within nucleotide-sugar biosynthesis; UDP-N-acetyl-alpha-D-glucosamine biosynthesis; alpha-D-glucosamine 6-phosphate from D-fructose 6-phosphate: step 1/1. Its activity is regulated as follows. Allosterically activated by N-acetylglucosamine-6-phosphate (GlcNAc6P). In terms of biological role, catalyzes the reversible conversion of alpha-D-glucosamine 6-phosphate (GlcN-6P) into beta-D-fructose 6-phosphate (Fru-6P) and ammonium ion, a regulatory reaction step in de novo uridine diphosphate-N-acetyl-alpha-D-glucosamine (UDP-GlcNAc) biosynthesis via hexosamine pathway. Deamination is coupled to aldo-keto isomerization mediating the metabolic flux from UDP-GlcNAc toward Fru-6P. At high ammonium level can drive amination and isomerization of Fru-6P toward hexosamines and UDP-GlcNAc synthesis. Has a role in fine tuning the metabolic fluctuations of cytosolic UDP-GlcNAc and their effects on hyaluronan synthesis that occur during tissue remodeling. This chain is Glucosamine-6-phosphate deaminase 2, found in Bos taurus (Bovine).